Consider the following 2664-residue polypeptide: Non-reducing polyketide synthase sorB (2664 aa).

Positions 21 to 45 (KSAPQSGNTADDIPNAASQPDTTST) are disordered. The span at 36-45 (AASQPDTTST) shows a compositional bias: polar residues. Positions 112–281 (ADHARRLAEW…TTPSRIASDL (170 aa)) are N-terminal acylcarrier protein transacylase domain (SAT). Catalysis depends on cysteine 184, which acts as the Nucleophile; for transacylase activity. The active-site Proton donor/acceptor; for transacylase activity is the histidine 302. The region spanning 428–849 (DNDIAVIGMS…GSNASMVIKQ (422 aa)) is the Ketosynthase family 3 (KS3) domain. Catalysis depends on for beta-ketoacyl synthase activity residues cysteine 596, histidine 731, and histidine 772. A malonyl-CoA:ACP transacylase (MAT) domain region spans residues 961-1276 (CFGGQVSKSV…TQGTRQLADV (316 aa)). An N-terminal hotdog fold region spans residues 1345–1477 (PGLYTFMGYG…GQLEFHRADD (133 aa)). The PKS/mFAS DH domain occupies 1345-1663 (PGLYTFMGYG…FSARSMSELF (319 aa)). Residues 1376 to 1548 (VSGYTLGKTV…PSESAGRAVK (173 aa)) are product template (PT) domain. The C-terminal hotdog fold stretch occupies residues 1507–1663 (DEVIQGQSIY…FSARSMSELF (157 aa)). The Carrier domain maps to 1711–1785 (TELWAKLLPV…GILAFLQSTL (75 aa)). Residue serine 1745 is modified to O-(pantetheine 4'-phosphoryl)serine. Residues 1789-1820 (GEDDASQSSDAASSSRNTPPSSNDGILATPSP) form a disordered region. Residues 1794–1803 (SQSSDAASSS) show a composition bias toward low complexity. Residues 2015-2197 (FQLMADFLSR…DAGYKHVEWT (183 aa)) are methyltransferase domain. Residues 2281–2526 (VTGTTGSLGS…TLRSFPAVEG (246 aa)) are NADPH-binding (R) domain.

Pantetheine 4'-phosphate serves as cofactor.

Its pathway is secondary metabolite biosynthesis. In terms of biological role, non-reducing polyketide synthase; part of the gene cluster that mediates the biosynthesis of sorbicillinoids, a diverse group of yellow secondary metabolites that restrict growth of competing pathogenic fungi but not of bacteria. Sorbicillinoids biosynthesis requires the action of two PKSs. SorA iteratively combines three acetyl units and the growing chain is modified by the ketoacyl reductase subunit, and optional by the enoyl reductase subunit in the second cycle. The polyketide is then handed over to the PKS SorB, which adds three more acetyl units, and two methyl groups. SorB releases an aldehyde, which undergoes spontaneous cyclization resulting in the formation of sorbicillin or 2',3'-dihydrosorbicillin. The monooxygenase sorC oxidizes sorbicillin and 2',3'-dihydrosorbicillin to 2',3'-dihydrosorbicillinol and sorbicillinol, respectively. The oxidoreductase sorD further converts sorbicillinol into oxosorbicillinol. Sorbicillinol is the building block for the other sorbicillinoids such as disorbicillinol, bisvertinolon, and dihydrobisvertinolone. The sequence is that of Non-reducing polyketide synthase sorB from Penicillium rubens (strain ATCC 28089 / DSM 1075 / NRRL 1951 / Wisconsin 54-1255) (Penicillium chrysogenum).